A 188-amino-acid chain; its full sequence is Adenylate kinase (188 aa).

10 to 15 (GCGKGT) lines the ATP pocket. The NMP stretch occupies residues 30–59 (STGDMLRHARAAGTELGRRVAAIMDGGNLV). AMP-binding positions include T31, R36, 57 to 59 (NLV), 85 to 88 (GFPR), and Q92. Positions 126–136 (KRAEEEGRPDD) are LID. R127 provides a ligand contact to ATP. AMP-binding residues include R133 and R144. An ATP-binding site is contributed by G172.

It belongs to the adenylate kinase family. Monomer.

It is found in the cytoplasm. It carries out the reaction AMP + ATP = 2 ADP. Its pathway is purine metabolism; AMP biosynthesis via salvage pathway; AMP from ADP: step 1/1. Catalyzes the reversible transfer of the terminal phosphate group between ATP and AMP. Plays an important role in cellular energy homeostasis and in adenine nucleotide metabolism. In Maricaulis maris (strain MCS10) (Caulobacter maris), this protein is Adenylate kinase.